We begin with the raw amino-acid sequence, 766 residues long: Signal transducer and activator of transcription 3.2 (766 aa).

The Essential for nuclear import signature appears at 150–162; that stretch reads DVRKKVQDLEQKM. The 91-residue stretch at 580 to 670 folds into the SH2 domain; sequence WNEGYIIGFI…DATNILVSPL (91 aa). Ser-725 carries the post-translational modification Phosphoserine; by NLK.

The protein belongs to the transcription factor STAT family. In terms of assembly, forms a homodimer or a heterodimer with a related family member. Interacts with nlk.2. In terms of processing, phosphorylation of both tyrosine and serine residues, together with dimerization, is required for mesoderm induction.

The protein localises to the cytoplasm. The protein resides in the nucleus. Transcription factor that binds to target promoter sequences and activates transcription upon il6st/gp130 stimulation. Mediates ventralization of embryos, at least in part via inhibition of smad2 signaling. Required for hairy2 to induce dll1/delta1 and promote neural crest cell proliferation and differentiation. Involved in TGFbeta-mediated mesoderm induction in early embryos, acting downstream of map3k7/tak1 and nlk.2. This chain is Signal transducer and activator of transcription 3.2 (stat3.2), found in Xenopus laevis (African clawed frog).